The chain runs to 533 residues: Protein translocase subunit SecD (533 aa).

Transmembrane regions (helical) follow at residues 8–28, 377–397, 400–420, 422–442, 469–489, and 495–515; these read ALLVVVVLIVGVVYLVPTFVS, IVGGIGTILFMLIYYRFGGVV, LALALNVLLVLAGMAAFGFTL, LPGIAGIALTIGMAVDANVLI, LTILDANVTTIIAALVLLQFG, and GFAVTLTVGLAANMFTAIFVT.

It belongs to the SecD/SecF family. SecD subfamily. Forms a complex with SecF. Part of the essential Sec protein translocation apparatus which comprises SecA, SecYEG and auxiliary proteins SecDF-YajC and YidC.

The protein resides in the cell inner membrane. Functionally, part of the Sec protein translocase complex. Interacts with the SecYEG preprotein conducting channel. SecDF uses the proton motive force (PMF) to complete protein translocation after the ATP-dependent function of SecA. The protein is Protein translocase subunit SecD of Syntrophobacter fumaroxidans (strain DSM 10017 / MPOB).